The chain runs to 355 residues: Putative [LysW]-L-2-aminoadipate/[LysW]-L-glutamate phosphate reductase (355 aa).

An NADP(+)-binding site is contributed by 13–16 (SGMT). Residue Cys-153 is part of the active site. Asn-323 contacts NADP(+).

It belongs to the NAGSA dehydrogenase family. Type 1 subfamily. LysY sub-subfamily.

It localises to the cytoplasm. The catalysed reaction is [amino-group carrier protein]-C-terminal-N-(1-carboxy-5-oxopentan-1-yl)-L-glutamine + phosphate + NADP(+) = [amino-group carrier protein]-C-terminal-N-(1-carboxy-5-phosphooxy-5-oxopentan-1-yl)-L-glutamine + NADPH + H(+). It catalyses the reaction [amino-group carrier protein]-C-terminal-gamma-(L-glutamyl-5-semialdehyde)-L-glutamate + phosphate + NADP(+) = [amino-group carrier protein]-C-terminal-gamma-(5-phospho-L-glutamyl)-L-glutamate + NADPH + H(+). The protein operates within amino-acid biosynthesis; L-lysine biosynthesis via AAA pathway; L-lysine from L-alpha-aminoadipate (Thermus route): step 3/5. It participates in amino-acid biosynthesis; L-arginine biosynthesis. In terms of biological role, involved in both the arginine and lysine biosynthetic pathways. This chain is Putative [LysW]-L-2-aminoadipate/[LysW]-L-glutamate phosphate reductase, found in Aeropyrum pernix (strain ATCC 700893 / DSM 11879 / JCM 9820 / NBRC 100138 / K1).